The chain runs to 228 residues: MPHASQLSLQEAMGPTMEEVIFLHDHVLLLTCLMTMVITMFTLTATTTALTHNDPTEEVEQLEAAWTVAPIMILILTALPSVRSLYLMEEVFNPYLTIKATGHQWYWNYEYSDGVKISFDSYMIQTKDLQNGSPRLLEVDHRMVMPAGLQTRVVVTAEDVLHSWTIPSLGVKVDAVPGRLNQLPLATSRVGVFYGQCSEICGANHSFMPIAMEATPLHHFEQWLISEQ.

Residues 1 to 14 lie on the Mitochondrial intermembrane side of the membrane; that stretch reads MPHASQLSLQEAMG. The helical transmembrane segment at 15–45 threads the bilayer; it reads PTMEEVIFLHDHVLLLTCLMTMVITMFTLTA. At 46–59 the chain is on the mitochondrial matrix side; that stretch reads TTTALTHNDPTEEV. A helical membrane pass occupies residues 60–87; the sequence is EQLEAAWTVAPIMILILTALPSVRSLYL. At 88 to 228 the chain is on the mitochondrial intermembrane side; the sequence is MEEVFNPYLT…HFEQWLISEQ (141 aa). 6 residues coordinate Cu cation: His162, Cys197, Glu199, Cys201, His205, and Met208. Mg(2+) is bound at residue Glu199.

It belongs to the cytochrome c oxidase subunit 2 family. As to quaternary structure, component of the cytochrome c oxidase (complex IV, CIV), a multisubunit enzyme composed of 14 subunits. The complex is composed of a catalytic core of 3 subunits MT-CO1, MT-CO2 and MT-CO3, encoded in the mitochondrial DNA, and 11 supernumerary subunits COX4I, COX5A, COX5B, COX6A, COX6B, COX6C, COX7A, COX7B, COX7C, COX8 and NDUFA4, which are encoded in the nuclear genome. The complex exists as a monomer or a dimer and forms supercomplexes (SCs) in the inner mitochondrial membrane with NADH-ubiquinone oxidoreductase (complex I, CI) and ubiquinol-cytochrome c oxidoreductase (cytochrome b-c1 complex, complex III, CIII), resulting in different assemblies (supercomplex SCI(1)III(2)IV(1) and megacomplex MCI(2)III(2)IV(2)). Found in a complex with TMEM177, COA6, COX18, COX20, SCO1 and SCO2. Interacts with TMEM177 in a COX20-dependent manner. Interacts with COX20. Interacts with COX16. Requires Cu cation as cofactor.

It is found in the mitochondrion inner membrane. The catalysed reaction is 4 Fe(II)-[cytochrome c] + O2 + 8 H(+)(in) = 4 Fe(III)-[cytochrome c] + 2 H2O + 4 H(+)(out). Functionally, component of the cytochrome c oxidase, the last enzyme in the mitochondrial electron transport chain which drives oxidative phosphorylation. The respiratory chain contains 3 multisubunit complexes succinate dehydrogenase (complex II, CII), ubiquinol-cytochrome c oxidoreductase (cytochrome b-c1 complex, complex III, CIII) and cytochrome c oxidase (complex IV, CIV), that cooperate to transfer electrons derived from NADH and succinate to molecular oxygen, creating an electrochemical gradient over the inner membrane that drives transmembrane transport and the ATP synthase. Cytochrome c oxidase is the component of the respiratory chain that catalyzes the reduction of oxygen to water. Electrons originating from reduced cytochrome c in the intermembrane space (IMS) are transferred via the dinuclear copper A center (CU(A)) of subunit 2 and heme A of subunit 1 to the active site in subunit 1, a binuclear center (BNC) formed by heme A3 and copper B (CU(B)). The BNC reduces molecular oxygen to 2 water molecules using 4 electrons from cytochrome c in the IMS and 4 protons from the mitochondrial matrix. This Lycodon semicarinatus (Ryukyu odd-tooth snake) protein is Cytochrome c oxidase subunit 2 (MT-CO2).